Reading from the N-terminus, the 238-residue chain is Orotidine 5'-phosphate decarboxylase (238 aa).

Substrate is bound by residues aspartate 10, lysine 32, 59 to 68 (DLKLHDIPNT), threonine 122, arginine 184, glutamine 193, glycine 213, and arginine 214. Lysine 61 functions as the Proton donor in the catalytic mechanism.

The protein belongs to the OMP decarboxylase family. Type 1 subfamily. In terms of assembly, homodimer.

It carries out the reaction orotidine 5'-phosphate + H(+) = UMP + CO2. It participates in pyrimidine metabolism; UMP biosynthesis via de novo pathway; UMP from orotate: step 2/2. Functionally, catalyzes the decarboxylation of orotidine 5'-monophosphate (OMP) to uridine 5'-monophosphate (UMP). This is Orotidine 5'-phosphate decarboxylase from Bacillus thuringiensis subsp. konkukian (strain 97-27).